The primary structure comprises 362 residues: Phosphoserine aminotransferase (362 aa).

Residues Ser9 and Arg42 each coordinate L-glutamate. Pyridoxal 5'-phosphate is bound by residues 76–77 (GR), Trp102, Thr153, Asp174, and Gln197. Residue Lys198 is modified to N6-(pyridoxal phosphate)lysine. 239 to 240 (NT) contacts pyridoxal 5'-phosphate.

It belongs to the class-V pyridoxal-phosphate-dependent aminotransferase family. SerC subfamily. Homodimer. Pyridoxal 5'-phosphate is required as a cofactor.

It is found in the cytoplasm. It carries out the reaction O-phospho-L-serine + 2-oxoglutarate = 3-phosphooxypyruvate + L-glutamate. The catalysed reaction is 4-(phosphooxy)-L-threonine + 2-oxoglutarate = (R)-3-hydroxy-2-oxo-4-phosphooxybutanoate + L-glutamate. Its pathway is amino-acid biosynthesis; L-serine biosynthesis; L-serine from 3-phospho-D-glycerate: step 2/3. The protein operates within cofactor biosynthesis; pyridoxine 5'-phosphate biosynthesis; pyridoxine 5'-phosphate from D-erythrose 4-phosphate: step 3/5. Its function is as follows. Catalyzes the reversible conversion of 3-phosphohydroxypyruvate to phosphoserine and of 3-hydroxy-2-oxo-4-phosphonooxybutanoate to phosphohydroxythreonine. The polypeptide is Phosphoserine aminotransferase (Shigella boydii serotype 4 (strain Sb227)).